We begin with the raw amino-acid sequence, 550 residues long: Phosphomannomutase (550 aa).

The active-site Phosphoserine intermediate is the Ser-148. Residues Ser-148, Asp-300, Asp-302, and Asp-304 each coordinate Mg(2+).

The protein belongs to the phosphohexose mutase family. Mg(2+) is required as a cofactor.

The enzyme catalyses alpha-D-mannose 1-phosphate = D-mannose 6-phosphate. In Mycoplasma genitalium (strain ATCC 33530 / DSM 19775 / NCTC 10195 / G37) (Mycoplasmoides genitalium), this protein is Phosphomannomutase (manB).